We begin with the raw amino-acid sequence, 198 residues long: NAD(P)H dehydrogenase (quinone) (198 aa).

In terms of domain architecture, Flavodoxin-like spans 4-190 (ILVLYYSMYG…ILASFQGAHV (187 aa)). Residues 10–15 (SMYGHI) and 79–81 (TRF) each bind FMN. Y12 provides a ligand contact to NAD(+). Residue W99 participates in substrate binding. FMN-binding positions include 114-119 (STGTGG) and H134.

It belongs to the WrbA family. FMN is required as a cofactor.

It carries out the reaction a quinone + NADH + H(+) = a quinol + NAD(+). The catalysed reaction is a quinone + NADPH + H(+) = a quinol + NADP(+). This is NAD(P)H dehydrogenase (quinone) from Azotobacter vinelandii (strain DJ / ATCC BAA-1303).